Reading from the N-terminus, the 95-residue chain is Large ribosomal subunit protein bL25 (95 aa).

This sequence belongs to the bacterial ribosomal protein bL25 family. Part of the 50S ribosomal subunit; part of the 5S rRNA/L5/L18/L25 subcomplex. Contacts the 5S rRNA. Binds to the 5S rRNA independently of L5 and L18.

In terms of biological role, this is one of the proteins that binds to the 5S RNA in the ribosome where it forms part of the central protuberance. This is Large ribosomal subunit protein bL25 from Shewanella oneidensis (strain ATCC 700550 / JCM 31522 / CIP 106686 / LMG 19005 / NCIMB 14063 / MR-1).